Consider the following 68-residue polypeptide: Protease A inhibitor 3 (68 aa).

Methionine 1 is subject to N-acetylmethionine. Over residues 1–14 the composition is skewed to polar residues; the sequence is MNTDQQKVSEIFQS. Disordered stretches follow at residues 1–21 and 33–68; these read MNTD…KLQG and MASQ…HKKE. Residues 1–32 are inhibitory domain; the sequence is MNTDQQKVSEIFQSSKEKLQGDAKVVSDAFKK. Over residues 33-53 the composition is skewed to basic and acidic residues; that stretch reads MASQDKDGKTTDADESEKHNY.

Belongs to the protease inhibitor I34 family.

In terms of biological role, specific and potent inhibitor for yeast aspartic protease A (yscA). The proteinase acts as a folding template stabilizing the helical conformation in the inhibitor, which results in the potent and specific blockage of the proteolytic activity. The protein is Protease A inhibitor 3 (PAI3) of Saccharomyces cerevisiae (strain ATCC 204508 / S288c) (Baker's yeast).